The sequence spans 315 residues: Ester hydrolase C11orf54 homolog (315 aa).

The Zn(2+) site is built by His-266, His-268, and His-278.

In terms of assembly, monomer. It depends on Zn(2+) as a cofactor.

The protein localises to the nucleus. The protein resides in the cytoplasm. Exhibits ester hydrolase activity on the substrate p-nitrophenyl acetate, in vitro. Regulates DNA damage and repair by regulating HIF1A degradation via chaperone-mediated autophagy (CMA). This chain is Ester hydrolase C11orf54 homolog, found in Mus musculus (Mouse).